The primary structure comprises 313 residues: Porphobilinogen deaminase (313 aa).

An S-(dipyrrolylmethanemethyl)cysteine modification is found at C242.

This sequence belongs to the HMBS family. Monomer. Requires dipyrromethane as cofactor.

The catalysed reaction is 4 porphobilinogen + H2O = hydroxymethylbilane + 4 NH4(+). It participates in porphyrin-containing compound metabolism; protoporphyrin-IX biosynthesis; coproporphyrinogen-III from 5-aminolevulinate: step 2/4. Its function is as follows. Tetrapolymerization of the monopyrrole PBG into the hydroxymethylbilane pre-uroporphyrinogen in several discrete steps. The sequence is that of Porphobilinogen deaminase from Escherichia coli (strain K12 / MC4100 / BW2952).